We begin with the raw amino-acid sequence, 507 residues long: Ribonuclease Y (507 aa).

A helical transmembrane segment spans residues Met1 to Tyr21. One can recognise a KH domain in the interval Thr197–Val282. One can recognise an HD domain in the interval Val323–Ala416.

This sequence belongs to the RNase Y family.

The protein localises to the cell membrane. Functionally, endoribonuclease that initiates mRNA decay. The polypeptide is Ribonuclease Y (Thermotoga sp. (strain RQ2)).